The chain runs to 458 residues: MVCESNNKSYLKSQNLKIIGKNSLRGNVKISGAKNSALVLLAASLLTDEKIILDNVPLLTDIEKMGNILKNLGVKLHNKDHQLIIDSKNISIQELPYELVNGLRASFFCIGALLTRFGKASLPLPGGCNIGERPINEHINGLRALGAEIIIEKEVVKAKLIKKKSKLFGANIRLNCPSVGATETLIMAASLAEGRTIIENAAREPEIQDLCQMLNKMGAKIYGAGKEKIIIDGVQKLHGCSHKVIPDRIEAGTFLIAAAATSSSITISPVIPNHLEAVLNKLEESGSKIEKKGNSISISGKSIKAVKIKTAPFPGFPTDLQAPFMALMTIAKGTSMISERIFENRMHHVNLLNQMGAAITVDDNTAIINGVKKLKGMNLVGSDLRSSAALIIAALISENISHIYGLEHLDRGYENFEFKLTKLGAKIIREVDGGIQTKSKNSSEIHPTKNLDINFNVA.

Residue 34–35 participates in phosphoenolpyruvate binding; that stretch reads KN. Arginine 104 contacts UDP-N-acetyl-alpha-D-glucosamine. Cysteine 128 functions as the Proton donor in the catalytic mechanism. 2-(S-cysteinyl)pyruvic acid O-phosphothioketal is present on cysteine 128. UDP-N-acetyl-alpha-D-glucosamine contacts are provided by aspartate 319 and isoleucine 341.

It belongs to the EPSP synthase family. MurA subfamily.

It localises to the cytoplasm. The enzyme catalyses phosphoenolpyruvate + UDP-N-acetyl-alpha-D-glucosamine = UDP-N-acetyl-3-O-(1-carboxyvinyl)-alpha-D-glucosamine + phosphate. Its pathway is cell wall biogenesis; peptidoglycan biosynthesis. Its function is as follows. Cell wall formation. Adds enolpyruvyl to UDP-N-acetylglucosamine. This is UDP-N-acetylglucosamine 1-carboxyvinyltransferase from Prochlorococcus marinus (strain MIT 9515).